The following is a 155-amino-acid chain: Protein-export protein SecB (155 aa).

Belongs to the SecB family. In terms of assembly, homotetramer, a dimer of dimers. One homotetramer interacts with 1 SecA dimer.

The protein resides in the cytoplasm. Functionally, one of the proteins required for the normal export of preproteins out of the cell cytoplasm. It is a molecular chaperone that binds to a subset of precursor proteins, maintaining them in a translocation-competent state. It also specifically binds to its receptor SecA. This is Protein-export protein SecB from Escherichia coli O139:H28 (strain E24377A / ETEC).